Consider the following 1323-residue polypeptide: DNA-directed RNA polymerase subunit beta' (1323 aa).

Positions 60, 62, 75, and 78 each coordinate Zn(2+). Residues Asp535, Asp537, and Asp539 each coordinate Mg(2+). Zn(2+) is bound by residues Cys894, Cys977, Cys984, and Cys987.

It belongs to the RNA polymerase beta' chain family. The RNAP catalytic core consists of 2 alpha, 1 beta, 1 beta' and 1 omega subunit. When a sigma factor is associated with the core the holoenzyme is formed, which can initiate transcription. Mg(2+) is required as a cofactor. Zn(2+) serves as cofactor.

It carries out the reaction RNA(n) + a ribonucleoside 5'-triphosphate = RNA(n+1) + diphosphate. Its function is as follows. DNA-dependent RNA polymerase catalyzes the transcription of DNA into RNA using the four ribonucleoside triphosphates as substrates. The protein is DNA-directed RNA polymerase subunit beta' of Corynebacterium urealyticum (strain ATCC 43042 / DSM 7109).